The sequence spans 620 residues: Probable potassium transport system protein Kup 1 (620 aa).

12 consecutive transmembrane segments (helical) span residues Gly7 to Leu27, Val50 to Ile70, Met102 to Ile122, Pro136 to Ile156, Phe168 to Val188, Leu211 to Tyr231, Trp246 to Ile266, Met284 to Ile304, Ile336 to Phe356, Ile368 to Leu388, Pro393 to Ala413, and Ile415 to Val435.

Belongs to the HAK/KUP transporter (TC 2.A.72) family.

The protein resides in the cell inner membrane. The catalysed reaction is K(+)(in) + H(+)(in) = K(+)(out) + H(+)(out). Transport of potassium into the cell. Likely operates as a K(+):H(+) symporter. This Rhodopseudomonas palustris (strain ATCC BAA-98 / CGA009) protein is Probable potassium transport system protein Kup 1.